Reading from the N-terminus, the 550-residue chain is MTKLLEINHIQTLCFAKGFSPARLNVATSPFRISRRGGGGYCSNACIPYRLKFTCYATLSAVVKEQASDFSGKEAALLVDELRSNFNSGRTKSYEWRISQLQNIARMIDEKEKCITEALYQDLSKPELEAFLAEISNTKSSCMLAIKELKNWMAPETVKTSVTTFPSSAQIVSEPLGVVLVISAWNFPFLLSVEPVIGAIAAGNAVVLKPSEIAPAASSLLAKLFSEYLDNTTIRVIEGGVPETTALLDQKWDKIFFTGGARVARIIMAAAARNLTPVVLELGGKCPALVDSDVNLQVAARRIIAGKWACNSGQACIGVDYVITTKDFASKLIDALKTELETFFGQNALESKDLSRIVNSFHFKRLESMLKENGVANKIVHGGRITEDKLKISPTILLDVPEASSMMQEEIFGPLLPIITVQKIEDGFQVIRSKPKPLAAYLFTNNKELEKQFVQDVSAGGITINDTVLHVTVKDLPFGGVGESGIGAYHGKFSYETFSHKKGVLYRSFSGDADLRYPPYTPKKKMVLKALLSSNIFAAILAFFGFSKDS.

A chloroplast-targeting transit peptide spans 1–59 (MTKLLEINHIQTLCFAKGFSPARLNVATSPFRISRRGGGGYCSNACIPYRLKFTCYATL). 259-264 (GGARVA) contributes to the NAD(+) binding site. Catalysis depends on glutamate 281, which acts as the Proton acceptor. Cysteine 316 serves as the catalytic Nucleophile.

It belongs to the aldehyde dehydrogenase family. As to quaternary structure, homodimer and homomultimer.

Its subcellular location is the plastid. The protein resides in the chloroplast. The catalysed reaction is an aldehyde + NAD(+) + H2O = a carboxylate + NADH + 2 H(+). With respect to regulation, thiol-based regulation. Inactivation after dimerization under oxidizing conditions. In terms of biological role, involved in oxidative stress tolerance by detoxifying reactive aldehydes derived from lipid peroxidation. Medium- to long-chain saturated aldehydes are preferred substrates, while the short-chain aldehyde propanal is a weak substrate. Can use both NAD(+) and NADP(+), but the coenzyme preference is substrate dependent. The chain is Aldehyde dehydrogenase family 3 member I1, chloroplastic (ALDH3I1) from Arabidopsis thaliana (Mouse-ear cress).